A 451-amino-acid chain; its full sequence is Gamma-aminobutyric acid receptor subunit alpha-2 (451 aa).

Residues 1-28 form the signal peptide; it reads MKTKLNIYNMQFLLFVFLVWDPARLVLA. Topologically, residues 29–249 are extracellular; it reads NIQEDEAKNN…MTAHFHLKRK (221 aa). N-linked (GlcNAc...) asparagine glycosylation occurs at Asn38. Arg94 contacts 4-aminobutanoate. The N-linked (GlcNAc...) asparagine glycan is linked to Asn138. Thr157 contacts 4-aminobutanoate. Cys166 and Cys180 are joined by a disulfide. A helical transmembrane segment spans residues 250-270; the sequence is IGYFVIQTYLPCIMTVILSQV. The Cytoplasmic portion of the chain corresponds to 271–280; sequence SFWLNRESVP. The chain crosses the membrane as a helical span at residues 281–300; the sequence is ARTVFGVTTVLTMTTLSISA. Topologically, residues 301–311 are extracellular; the sequence is RNSLPKVAYAT. The helical transmembrane segment at 312-332 threads the bilayer; it reads AMDWFIAVCYAFVFSALIEFA. At 333 to 420 the chain is on the cytoplasmic side; sequence TVNYFTKRGW…FNSVSKIDRM (88 aa). The helical transmembrane segment at 421-441 threads the bilayer; sequence SRIVFPVLFGTFNLVYWATYL. Residues 442–451 lie on the Extracellular side of the membrane; it reads NREPVLGVSP.

Belongs to the ligand-gated ion channel (TC 1.A.9) family. Gamma-aminobutyric acid receptor (TC 1.A.9.5) subfamily. GABRA2 sub-subfamily. Heteropentamer, formed by a combination of alpha (GABRA1-6), beta (GABRB1-3), gamma (GABRG1-3), delta (GABRD), epsilon (GABRE), rho (GABRR1-3), pi (GABRP) and theta (GABRQ) subunits, each subunit exhibiting distinct physiological and pharmacological properties. Interacts with UBQLN1. Interacts with KIF21B. Interacts with LHFPL4. Interacts with SHISA7; interaction leads to the regulation of GABA(A) receptor trafficking, channel deactivation kinetics and pharmacology. Glycosylated.

The protein resides in the postsynaptic cell membrane. It is found in the cell membrane. It localises to the cytoplasmic vesicle membrane. The protein localises to the cell projection. Its subcellular location is the dendrite. The enzyme catalyses chloride(in) = chloride(out). With respect to regulation, activated by pentobarbital. Inhibited by the antagonist bicuculline. Alpha subunit of the heteropentameric ligand-gated chloride channel gated by gamma-aminobutyric acid (GABA), a major inhibitory neurotransmitter in the brain. GABA-gated chloride channels, also named GABA(A) receptors (GABAAR), consist of five subunits arranged around a central pore and contain GABA active binding site(s) located at the alpha and beta subunit interfaces. When activated by GABA, GABAARs selectively allow the flow of chloride anions across the cell membrane down their electrochemical gradient. Chloride influx into the postsynaptic neuron following GABAAR opening decreases the neuron ability to generate a new action potential, thereby reducing nerve transmission. The alpha-2 subunit exhibits synaptogenic activity together with beta-2 and very little to no activity together with beta-3, the gamma-2 subunit being necessary but not sufficient to induce rapid synaptic contacts formation. This is Gamma-aminobutyric acid receptor subunit alpha-2 from Homo sapiens (Human).